A 152-amino-acid polypeptide reads, in one-letter code: Ribosome maturation factor RimP (152 aa).

This sequence belongs to the RimP family.

It is found in the cytoplasm. Its function is as follows. Required for maturation of 30S ribosomal subunits. The protein is Ribosome maturation factor RimP of Teredinibacter turnerae (strain ATCC 39867 / T7901).